Consider the following 250-residue polypeptide: 1-(5-phosphoribosyl)-5-[(5-phosphoribosylamino)methylideneamino] imidazole-4-carboxamide isomerase (250 aa).

D12 serves as the catalytic Proton acceptor. The active-site Proton donor is D134.

It belongs to the HisA/HisF family.

It is found in the cytoplasm. It carries out the reaction 1-(5-phospho-beta-D-ribosyl)-5-[(5-phospho-beta-D-ribosylamino)methylideneamino]imidazole-4-carboxamide = 5-[(5-phospho-1-deoxy-D-ribulos-1-ylimino)methylamino]-1-(5-phospho-beta-D-ribosyl)imidazole-4-carboxamide. Its pathway is amino-acid biosynthesis; L-histidine biosynthesis; L-histidine from 5-phospho-alpha-D-ribose 1-diphosphate: step 4/9. The protein is 1-(5-phosphoribosyl)-5-[(5-phosphoribosylamino)methylideneamino] imidazole-4-carboxamide isomerase of Actinobacillus pleuropneumoniae serotype 7 (strain AP76).